The primary structure comprises 66 residues: uncharacterized protein (66 aa).

This is an uncharacterized protein from Schizosaccharomyces pombe (strain 972 / ATCC 24843) (Fission yeast).